Here is a 375-residue protein sequence, read N- to C-terminus: CC-adding tRNA nucleotidyltransferase (375 aa).

27 to 30 contributes to the CTP binding site; the sequence is GAVR. Residues aspartate 40 and aspartate 42 each coordinate Mg(2+). Residues 95-96, asparagine 100, 137-146, and arginine 177 each bind CTP; these read RD and DPLRMLRAPR.

The protein belongs to the tRNA nucleotidyltransferase/poly(A) polymerase family. It depends on Mg(2+) as a cofactor.

It carries out the reaction a tRNA precursor + 2 CTP = a tRNA with a 3' CC end + 2 diphosphate. In terms of biological role, tRNA nucleotidyltransferase involved in the synthesis of the tRNA CCA terminus. Adds the two cytidine residues to tRNA. This chain is CC-adding tRNA nucleotidyltransferase, found in Halalkalibacterium halodurans (strain ATCC BAA-125 / DSM 18197 / FERM 7344 / JCM 9153 / C-125) (Bacillus halodurans).